The sequence spans 41 residues: MKIRNSLKALKGRHRENRMVRRKGRIYIINKSNPRYKARQG.

This sequence belongs to the bacterial ribosomal protein bL36 family.

The polypeptide is Large ribosomal subunit protein bL36 (Chelativorans sp. (strain BNC1)).